Consider the following 265-residue polypeptide: uncharacterized protein (265 aa).

A divalent metal cation contacts are provided by histidine 7, histidine 9, glutamate 95, histidine 131, histidine 156, and aspartate 206.

Belongs to the metallo-dependent hydrolases superfamily. TatD-type hydrolase family. Requires a divalent metal cation as cofactor.

This is an uncharacterized protein from Buchnera aphidicola subsp. Baizongia pistaciae (strain Bp).